The chain runs to 411 residues: Protein translocase subunit SecY (411 aa).

The next 10 membrane-spanning stretches (helical) occupy residues 13–33, 52–72, 111–131, 135–155, 163–180, 197–217, 252–272, 291–311, 350–370, and 377–397; these read FTLL…PGID, IFSG…VPYI, ALGW…PYVF, FTFV…IMWL, GIGN…VSGL, SIKF…TIFV, GVMP…LTQL, LYLV…TSIV, FLGA…EKVA, and GLGA…AKQI.

Belongs to the SecY/SEC61-alpha family. In terms of assembly, component of the plastid Sec protein translocase complex, which is composed of at least SecY, SecE and SecG.

Its subcellular location is the plastid. It is found in the chloroplast thylakoid membrane. Functionally, the central subunit of the protein translocation channel SecYE. Consists of two halves formed by TMs 1-5 and 6-10. These two domains form a lateral gate at the front which open onto the bilayer between TMs 2 and 7, and are clamped together by SecE at the back. The channel is closed by both a pore ring composed of hydrophobic SecY resides and a short helix (helix 2A) on the extracellular side of the membrane which forms a plug. The sequence is that of Protein translocase subunit SecY from Porphyra purpurea (Red seaweed).